The chain runs to 156 residues: Small ribosomal subunit protein uS7 (156 aa).

This sequence belongs to the universal ribosomal protein uS7 family. As to quaternary structure, part of the 30S ribosomal subunit. Contacts proteins S9 and S11.

Its function is as follows. One of the primary rRNA binding proteins, it binds directly to 16S rRNA where it nucleates assembly of the head domain of the 30S subunit. Is located at the subunit interface close to the decoding center, probably blocks exit of the E-site tRNA. In Novosphingobium aromaticivorans (strain ATCC 700278 / DSM 12444 / CCUG 56034 / CIP 105152 / NBRC 16084 / F199), this protein is Small ribosomal subunit protein uS7.